The chain runs to 224 residues: Synaptogyrin-2 (224 aa).

Met-1 carries the post-translational modification N-acetylmethionine. Phosphoserine is present on Ser-3. An MARVEL domain is found at 20 to 171 (FLKQPQVVVR…LAFLAYQRYK (152 aa)). The next 4 helical transmembrane spans lie at 26–46 (VVVR…IFGE), 73–93 (AIGV…IYFP), 105–125 (VIGD…GFCF), and 147–167 (AAIT…FLAY). Positions 196-224 (PGVPADTYQQPPFTQNAESTEGYQPPPVY) are disordered. Residues 202–217 (TYQQPPFTQNAESTEG) show a composition bias toward polar residues.

The protein belongs to the synaptogyrin family. Post-translationally, may be tyrosine phosphorylated by Src.

It is found in the cytoplasmic vesicle membrane. The protein resides in the cytoplasmic vesicle. It localises to the secretory vesicle. Its subcellular location is the synaptic vesicle membrane. Functionally, may play a role in regulated exocytosis. In neuronal cells, modulates the localization of synaptophysin/SYP into synaptic-like microvesicles and may therefore play a role in the formation and/or the maturation of this vesicles. May also play a role in GLUT4 storage and transport to the plasma membrane. The polypeptide is Synaptogyrin-2 (Bos taurus (Bovine)).